The chain runs to 771 residues: Topoisomerase 1-associated factor 2 (771 aa).

Disordered regions lie at residues Asn-48–Ser-69, Glu-271–Asp-330, and Ser-346–Leu-367. Positions Asn-51 to Ser-69 are enriched in low complexity. The segment covering Thr-275–Asn-294 has biased composition (polar residues). Residues Asp-295–Leu-307 are compositionally biased toward basic and acidic residues. A compositionally biased stretch (polar residues) spans Ser-346–Ala-359. Ser-397 carries the phosphoserine modification. Thr-405 bears the Phosphothreonine mark. Residues Asn-633–Gln-771 are disordered. Polar residues predominate over residues Ala-640 to Val-652. Over residues Ser-690–Ser-709 the composition is skewed to low complexity.

To yeast YJL076w. In terms of assembly, interacts with HPR1.

It is found in the nucleus. The polypeptide is Topoisomerase 1-associated factor 2 (TOF2) (Saccharomyces cerevisiae (strain ATCC 204508 / S288c) (Baker's yeast)).